A 414-amino-acid chain; its full sequence is Autophagy-related protein 18 (414 aa).

WD repeat units lie at residues 1-36, 69-114, 185-225, and 230-269; these read MAMN…KSYE, KRQS…LLYT, AHRS…KLYQ, and SIPS…SSRE. Positions 226–230 match the L/FRRG motif motif; sequence FRRGS. Residues 261–314 form a disordered region; that stretch reads LSHQTSSREGSPSSALSRERAASQSSLGTSPDPDDPTDDMESSEIASRKHNGTL. Positions 262 to 289 are enriched in polar residues; the sequence is SHQTSSREGSPSSALSRERAASQSSLGT. A compositionally biased stretch (acidic residues) spans 292-302; the sequence is DPDDPTDDMES. WD repeat units follow at residues 309–355 and 367–407; these read KHNG…AWIK and GNAG…GGEG.

The protein belongs to the WD repeat PROPPIN family. In terms of assembly, component of the PI(3,5)P2 regulatory complex.

It localises to the preautophagosomal structure membrane. It is found in the vacuole membrane. The protein resides in the endosome membrane. In terms of biological role, the PI(3,5)P2 regulatory complex regulates both the synthesis and turnover of phosphatidylinositol 3,5-bisphosphate (PtdIns(3,5)P2). Necessary for proper vacuole morphology. Plays an important role in osmotically-induced vacuole fragmentation. Required for cytoplasm to vacuole transport (Cvt) vesicle formation, pexophagy and starvation-induced autophagy. Involved in correct atg9 trafficking to the pre-autophagosomal structure. Might also be involved in premeiotic DNA replication. The chain is Autophagy-related protein 18 (atg18) from Aspergillus terreus (strain NIH 2624 / FGSC A1156).